We begin with the raw amino-acid sequence, 164 residues long: 6,7-dimethyl-8-ribityllumazine synthase (164 aa).

Residues F22, 56–58 (AWE), and 80–82 (AVI) contribute to the 5-amino-6-(D-ribitylamino)uracil site. 85–86 (DT) contacts (2S)-2-hydroxy-3-oxobutyl phosphate. The active-site Proton donor is the H88. L113 lines the 5-amino-6-(D-ribitylamino)uracil pocket. (2S)-2-hydroxy-3-oxobutyl phosphate is bound at residue R127.

It belongs to the DMRL synthase family.

It catalyses the reaction (2S)-2-hydroxy-3-oxobutyl phosphate + 5-amino-6-(D-ribitylamino)uracil = 6,7-dimethyl-8-(1-D-ribityl)lumazine + phosphate + 2 H2O + H(+). Its pathway is cofactor biosynthesis; riboflavin biosynthesis; riboflavin from 2-hydroxy-3-oxobutyl phosphate and 5-amino-6-(D-ribitylamino)uracil: step 1/2. Its function is as follows. Catalyzes the formation of 6,7-dimethyl-8-ribityllumazine by condensation of 5-amino-6-(D-ribitylamino)uracil with 3,4-dihydroxy-2-butanone 4-phosphate. This is the penultimate step in the biosynthesis of riboflavin. This Gemmatimonas aurantiaca (strain DSM 14586 / JCM 11422 / NBRC 100505 / T-27) protein is 6,7-dimethyl-8-ribityllumazine synthase.